Reading from the N-terminus, the 342-residue chain is (Lyso)-N-acylphosphatidylethanolamine lipase (342 aa).

The AB hydrolase-1 domain occupies Pro-70–Tyr-323.

This sequence belongs to the peptidase S33 family. ABHD4/ABHD5 subfamily. As to expression, highest levels in the CNS and in testis, intermediate levels in liver and kidney. Hardly detectable in heart.

It catalyses the reaction N-hexadecanoyl-1,2-di-(9Z-octadecenoyl)-sn-glycero-3-phosphoethanolamine + H2O = N-hexadecanoyl-1-(9Z-octadecenoyl)-sn-glycero-3-phosphoethanolamine + (9Z)-octadecenoate + H(+). The catalysed reaction is an N-acyl-1,2-diacyl-sn-glycero-3-phosphoethanolamine + H2O = N,1-diacyl-sn-glycero-3-phosphoethanolamine + a fatty acid + H(+). The enzyme catalyses N-hexadecanoyl-1-(9Z-octadecenoyl)-sn-glycero-3-phosphoethanolamine + H2O = N-hexadecanoyl-sn-glycero-3-phosphoethanolamine + (9Z)-octadecenoate + H(+). It carries out the reaction N-octadecanoyl-1-(9Z-octadecenoyl)-sn-glycero-3-phosphoethanolamine + H2O = N-octadecanoyl-sn-glycero-3-phospho-ethanolamine + (9Z)-octadecenoate + H(+). It catalyses the reaction N-eicosanoyl-1-(9Z-octadecenoyl)-sn-glycero-3-phosphoethanolamine + H2O = N-eicosanoyl-sn-glycero-3-phosphoethanolamine + (9Z)-octadecenoate + H(+). The catalysed reaction is N,1-di-(9Z-octadecenoyl)-sn-glycero-3-phosphoethanolamine + H2O = N-(9Z-octadecenoyl)-sn-glycero-3-phosphoethanolamine + (9Z)-octadecenoate + H(+). The enzyme catalyses N-(5Z,8Z,11Z,14Z-eicosatetraenoyl)-1-(9Z-octadecenoyl)-sn-glycero-3-phosphoethanolamine + H2O = N-(5Z,8Z,11Z,14Z-eicosatetraenoyl)-sn-glycero-3-phosphoethanolamine + (9Z)-octadecenoate + H(+). It carries out the reaction 1-octadecanoyl-2-(9Z-octadecenoyl)-sn-glycero-3-phospho-(N-hexadecanoyl)-serine + H2O = 1-octadecanoyl-2-hydroxy-sn-glycero-3-phospho-(N-hexadecanoyl)-serine + (9Z)-octadecenoate + H(+). It catalyses the reaction 1-O-(1Z-octadecenoyl)-2-(9Z-octadecenoyl)-sn-glycero-3-phospho-N-hexadecanoyl-ethanolamine + H2O = 1-O-(1Z-octadecenyl)-sn-glycero-3-phospho-N-hexadecanoyl-ethanolamine + (9Z)-octadecenoate + H(+). The catalysed reaction is N,1-diacyl-sn-glycero-3-phosphoethanolamine + H2O = N-acyl-sn-glycero-3-phosphoethanolamine + a fatty acid + H(+). In terms of biological role, lysophospholipase selective for N-acyl phosphatidylethanolamine (NAPE). Contributes to the biosynthesis of N-acyl ethanolamines, including the endocannabinoid anandamide by hydrolyzing the sn-1 and sn-2 acyl chains from N-acyl phosphatidylethanolamine (NAPE) generating glycerophospho-N-acyl ethanolamine (GP-NAE), an intermediate for N-acyl ethanolamine biosynthesis. Hydrolyzes substrates bearing saturated, monounsaturated, polyunsaturated N-acyl chains. Shows no significant activity towards other lysophospholipids, including lysophosphatidylcholine, lysophosphatidylethanolamine and lysophosphatidylserine. The chain is (Lyso)-N-acylphosphatidylethanolamine lipase from Mus musculus (Mouse).